A 246-amino-acid chain; its full sequence is Adenylate kinase 4 (246 aa).

A2 is subject to N-acetylalanine. Residue 43–48 coordinates ATP; sequence GSGKGT. The interval 63 to 92 is NMP; it reads STGDMLRAAVASKTPLGVKAKEAMEKGELV. AMP is bound by residues T64, R69, 90–92, 118–121, and Q125; these read ELV and GFPR. Residues 159–196 form an LID region; the sequence is GRWIHPSSGRSYHTKFAPPKTPGVDDITGEPLIQRKDD. R160 contributes to the ATP binding site. Residues R193 and R204 each contribute to the AMP site.

The protein belongs to the adenylate kinase family. In terms of assembly, monomer.

It is found in the cytoplasm. The catalysed reaction is AMP + ATP = 2 ADP. Catalyzes the reversible transfer of the terminal phosphate group between ATP and AMP. Plays an important role in cellular energy homeostasis and in adenine nucleotide metabolism. This Arabidopsis thaliana (Mouse-ear cress) protein is Adenylate kinase 4 (ADK1).